The chain runs to 492 residues: 2,3-bisphosphoglycerate-independent phosphoglycerate mutase (492 aa).

Mn(2+)-binding residues include Asp11 and Ser61. Residue Ser61 is the Phosphoserine intermediate of the active site. Residues His118, 147–148 (RD), Arg178, Arg184, 248–251 (RNDR), and Lys320 contribute to the substrate site. Residues Asp386, His390, Asp427, His428, and His445 each contribute to the Mn(2+) site.

The protein belongs to the BPG-independent phosphoglycerate mutase family. As to quaternary structure, monomer. The cofactor is Mn(2+).

It catalyses the reaction (2R)-2-phosphoglycerate = (2R)-3-phosphoglycerate. The protein operates within carbohydrate degradation; glycolysis; pyruvate from D-glyceraldehyde 3-phosphate: step 3/5. Functionally, catalyzes the interconversion of 2-phosphoglycerate and 3-phosphoglycerate. This is 2,3-bisphosphoglycerate-independent phosphoglycerate mutase from Campylobacter jejuni subsp. doylei (strain ATCC BAA-1458 / RM4099 / 269.97).